A 132-amino-acid chain; its full sequence is Interleukin-13 (132 aa).

The signal sequence occupies residues 1-18 (MALLLTAVIVLICFGGLT). 4 N-linked (GlcNAc...) asparagine glycosylation sites follow: Asn-38, Asn-49, Asn-57, and Asn-75. Cystine bridges form between Cys-48–Cys-76 and Cys-64–Cys-90.

This sequence belongs to the IL-4/IL-13 family. As to quaternary structure, interacts with IL13RA2.

The protein localises to the secreted. Its function is as follows. Cytokine that plays important roles in allergic inflammation and immune response to parasite infection. Synergizes with IL2 in regulating interferon-gamma synthesis. Stimulates B-cell proliferation, and activation of eosinophils, basophils, and mast cells. Plays an important role in controlling IL33 activity by modulating the production of transmembrane and soluble forms of interleukin-1 receptor-like 1/IL1RL1. Displays the capacity to antagonize Th1-driven proinflammatory immune response and downregulates synthesis of many proinflammatory cytokines including IL1, IL6, IL10, IL12 and TNF-alpha through a mechanism that partially involves suppression of NF-kappa-B. Also functions on nonhematopoietic cells, including endothelial cells where it induces vascular cell adhesion protein 1/VCAM1, which is important in the recruitment of eosinophils. Exerts its biological effects through its receptors which comprises the IL4R chain and the IL13RA1 chain, to activate JAK1 and TYK2, leading to the activation of STAT6. Aside from IL13RA1, another receptor IL13RA2 acts as a high affinity decoy for IL13 and mediates internalization and depletion of extracellular IL13. In Bos taurus (Bovine), this protein is Interleukin-13 (IL13).